A 281-amino-acid chain; its full sequence is DegV domain-containing protein SCO2569 (281 aa).

Positions 5–280 (VAIVTDSTAY…PGLLGVVVSS (276 aa)) constitute a DegV domain. The hexadecanoate site is built by Thr-62 and Ser-95.

Its function is as follows. May bind long-chain fatty acids, such as palmitate, and may play a role in lipid transport or fatty acid metabolism. In Streptomyces coelicolor (strain ATCC BAA-471 / A3(2) / M145), this protein is DegV domain-containing protein SCO2569.